A 213-amino-acid polypeptide reads, in one-letter code: Peptidyl-tRNA hydrolase (213 aa).

Tyr26 is a binding site for tRNA. His31 acts as the Proton acceptor in catalysis. The tRNA site is built by Tyr78, Asn80, and Asn126.

It belongs to the PTH family. Monomer.

Its subcellular location is the cytoplasm. The enzyme catalyses an N-acyl-L-alpha-aminoacyl-tRNA + H2O = an N-acyl-L-amino acid + a tRNA + H(+). Hydrolyzes ribosome-free peptidyl-tRNAs (with 1 or more amino acids incorporated), which drop off the ribosome during protein synthesis, or as a result of ribosome stalling. Functionally, catalyzes the release of premature peptidyl moieties from peptidyl-tRNA molecules trapped in stalled 50S ribosomal subunits, and thus maintains levels of free tRNAs and 50S ribosomes. The protein is Peptidyl-tRNA hydrolase of Trichormus variabilis (strain ATCC 29413 / PCC 7937) (Anabaena variabilis).